Here is a 161-residue protein sequence, read N- to C-terminus: Epoxidase gkaX (161 aa).

The signal sequence occupies residues 1 to 18 (MSLSTSLRLLRLLPAISS). Asparagine 45 is a glycosylation site (N-linked (GlcNAc...) asparagine). Helical transmembrane passes span 59–79 (WQWI…LNLV), 92–112 (IWYV…KMAL), and 139–159 (WVRA…AAVS).

Belongs to the epoxidase xenD family.

It is found in the membrane. The protein operates within mycotoxin biosynthesis. Functionally, epoxidase; part of the gene cluster that mediates the biosynthesis of GKK1032, fungal natural products containing a macrocyclic para-cyclophane connected to a decahydrofluorene ring system that show potent antitumor activities. Within the pathway, gkaX functions synergistically with gkaB and gkaZ to form the cyclophane. The pathway begins with the PKS-NRPS gkaA which, with the help of the trans-enoyl reductase gkaC, synthesizes the polyketide-tyrosyl acyl thioester product which can be reductively off-loaded by the terminal reductase (R) domain in gkaA. The alpha/beta hydrolase gkaG is then required to catalyze the subsequent Knoevenagel condensation that affords the 3-pyrrolin-2-one ring, whereas the three proteins gkaB, gkaX and gkaZ then function synergistically to form the cyclophane. The polypeptide is Epoxidase gkaX (Penicillium citrinum).